Here is a 301-residue protein sequence, read N- to C-terminus: Acetyl-coenzyme A carboxylase carboxyl transferase subunit beta (301 aa).

A CoA carboxyltransferase N-terminal domain is found at 25-294; it reads LWIKDPSTGE…NSDAPEHEKT (270 aa). The segment at 282–301 is disordered; the sequence is QPGNSDAPEHEKTEATDKAA. Basic and acidic residues predominate over residues 288–301; that stretch reads APEHEKTEATDKAA.

The protein belongs to the AccD/PCCB family. In terms of assembly, acetyl-CoA carboxylase is a heterohexamer composed of biotin carboxyl carrier protein (AccB), biotin carboxylase (AccC) and two subunits each of ACCase subunit alpha (AccA) and ACCase subunit beta (AccD).

It is found in the cytoplasm. It catalyses the reaction N(6)-carboxybiotinyl-L-lysyl-[protein] + acetyl-CoA = N(6)-biotinyl-L-lysyl-[protein] + malonyl-CoA. It functions in the pathway lipid metabolism; malonyl-CoA biosynthesis; malonyl-CoA from acetyl-CoA: step 1/1. Its function is as follows. Component of the acetyl coenzyme A carboxylase (ACC) complex. Biotin carboxylase (BC) catalyzes the carboxylation of biotin on its carrier protein (BCCP) and then the CO(2) group is transferred by the transcarboxylase to acetyl-CoA to form malonyl-CoA. In Brucella anthropi (strain ATCC 49188 / DSM 6882 / CCUG 24695 / JCM 21032 / LMG 3331 / NBRC 15819 / NCTC 12168 / Alc 37) (Ochrobactrum anthropi), this protein is Acetyl-coenzyme A carboxylase carboxyl transferase subunit beta.